The following is a 252-amino-acid chain: PF03932 family protein CutC (252 aa).

This sequence belongs to the CutC family.

The protein localises to the cytoplasm. In Sodalis glossinidius (strain morsitans), this protein is PF03932 family protein CutC.